A 355-amino-acid chain; its full sequence is Syntaxin-5 (355 aa).

The Cytoplasmic portion of the chain corresponds to 1 to 333; it reads MIPRKRYGSK…KYFQSVTSNR (333 aa). A compositionally biased stretch (polar residues) spans 28–37; it reads PATAGSSSSD. The interval 28–47 is disordered; that stretch reads PATAGSSSSDIAPLPPPVAL. An IxM motif; signal for cargo packaging into COPII-coated vesicles motif is present at residues 245 to 247; that stretch reads IDM. Residues 263–325 enclose the t-SNARE coiled-coil homology domain; the sequence is DSYIQSRADT…EAAHSEILKY (63 aa). Residues 287–318 are a coiled coil; it reads FQQLAHMVKEQEETIQRIDENVLGAQLDVEAA. Residues 334–354 form a helical; Anchor for type IV membrane protein membrane-spanning segment; that stretch reads WLMVKIFLILIVFFIIFVVFL. Ala355 is a topological domain (vesicular).

The protein belongs to the syntaxin family. As to quaternary structure, part of a ternary complex containing STX5A, NSFL1C and VCP. Part of a unique SNARE complex composed of the Golgi SNAREs GOSR1, GOSR2 and YKT6. This complex also includes VTI1A. Component of a SNARE complex consisting of STX5, YKT6, GOSR1 and BET1L. Interacts with BET1L. Interacts with BET1. Interacts with COG4. Interacts with GM130/GOLGA2. Interacts (via IxM motif) with SEC24C and SEC24D; mediates STX5 packaging into COPII-coated vesicles. Interacts with VLDLR; this interaction mediates VLDLR translocation from the endoplasmic reticulum to the plasma membrane.

The protein resides in the endoplasmic reticulum-Golgi intermediate compartment membrane. It localises to the golgi apparatus membrane. Functionally, mediates endoplasmic reticulum to Golgi transport. Together with p115/USO1 and GM130/GOLGA2, involved in vesicle tethering and fusion at the cis-Golgi membrane to maintain the stacked and inter-connected structure of the Golgi apparatus. The chain is Syntaxin-5 (STX5) from Bos taurus (Bovine).